A 746-amino-acid polypeptide reads, in one-letter code: MNSPASDETAPRRNRRKVSRKNYDENAMDELIEKQLGGKAKKKYRTKQDLEKETETEALIALSVGFPIDELLEEEIRAGVVRELGGKEQNDYIVVRNHIVARWRGNVGIWLLKDQIRETVSSDFEHLISAAYDFLLFNGYINFGVSPLFAPYIPEEGTEGSVIVVGAGLAGLAAARQLLSFGFKVLVLEGRSRPGGRVYTQKMGGKDRFAAVELGGSVITGLHANPLGVLARQLSIPLHKVRDNCPLYNSEGVLVDKVADSNVEFGFNKLLDKVTEVREMMEGAAKKISLGEVLETLRVLYGVAKDSEERKLFDWHLANLEYANAGCLSNLSAAYWDQDDPYEMGGDHCFLAGGNWRLINALAEGLPIIYGKSVDTIKYGDGGVEVISGSQIFQADMILCTVPLGVLKKRSIKFEPELPRRKQAAIDRLGFGLLNKVAMLFPSVFWGDELDTFGCLNESSINRGEFFLFYAYHTVSGGPALVALVAGEAAQRFECTEPSVLLHRVLKKLRGIYGPKGVVVPDPIQTVCTRWGSDPLSYGSYSHVRVGSSGVDYDILAESVSNRLFFAGEATTRQHPATMHGAYLSGLREASKILHVANYLRSNLKKPVQRYSGVNINVLEDMFKRPDIAIGKLSFVFNPLTDDPKSFGLVRVCFDNFEEDPTNRLQLYTILSREQANKIKELDENSNESKLSCLMNTLGLKLMGANSVLDTGGALISVIANARRGRSRSHVVAGQCNLPLNPLHFN.

Positions 1–26 (MNSPASDETAPRRNRRKVSRKNYDEN) are disordered. The region spanning 51-152 (EKETETEALI…FGVSPLFAPY (102 aa)) is the SWIRM domain. Residues Glu189, Arg191, Arg197, and Glu569 each contribute to the FAD site.

This sequence belongs to the flavin monoamine oxidase family. FAD serves as cofactor. Expressed in the shoot and root apical regions of young seedlings. Expressed in inflorescences.

Functionally, probable histone demethylase that reduces the levels of histone H3 'Lys-4' methylation in chromatin of the floral repressor FLOWERING LOCUS C (FLC) and the sporophytically silenced floral repressor FWA. Seems to act in partial redundancy with FLOWERING LOCUS D (FLD) to repress FLC expression. Required for cytosine methylation of FWA. Controls primary seed dormancy by regulating DOG1 and abscisic acid signaling-related genes. In Arabidopsis thaliana (Mouse-ear cress), this protein is Lysine-specific histone demethylase 1 homolog 2.